A 350-amino-acid polypeptide reads, in one-letter code: MSEVKSRKKSGPKGAPAAEPGKRSEGGKTPVARSSGGGGWADPRTCLSLLSLGTCLGLAWFVFQQSEKFAKVENQYQLLKLETNEFQQLQSKISLISEKWQKSEAIMEQLKSFQIIAHLKRLQEEINEVKTWSNRITEKQDILNNSLTTLSQDITKVDQSTTSMAKDVGLKITSVKTDIRRISGLVTDVISLTDSVQELENKIEKVEKNTVKNIGDLLSSSIDRTATLRKTASENSQRINSVKKTLTELKSDFDKHTDRFLSLEGDRAKVLKTVTFANDLKPKVYNLKKDFSRLEPLVNDLTLRIGRLVTDLLQREKEIAFLSEKISNLTIVQAEIKDIKDEIAHISDMN.

The span at 1–11 shows a compositional bias: basic residues; that stretch reads MSEVKSRKKSG. A disordered region spans residues 1–39; the sequence is MSEVKSRKKSGPKGAPAAEPGKRSEGGKTPVARSSGGGG. The helical transmembrane segment at 46–62 threads the bilayer; the sequence is CLSLLSLGTCLGLAWFV. N-linked (GlcNAc...) asparagine glycosylation occurs at Asn-144. The stretch at 184-217 forms a coiled coil; sequence GLVTDVISLTDSVQELENKIEKVEKNTVKNIGDL. Asn-328 is a glycosylation site (N-linked (GlcNAc...) asparagine).

In terms of processing, N-glycosylated. Isoform 4 is glycosylated at Asn-154. In terms of tissue distribution, expressed in vein endothelial cells. Isoform 4 is expressed in lung, kidney, spleen, thymus and skeletal muscle.

The protein localises to the endoplasmic reticulum membrane. Functionally, target of p53/TP53 with pro-apoptotic function. This Homo sapiens (Human) protein is Inhibitor of nuclear factor kappa-B kinase-interacting protein (IKBIP).